The following is a 317-amino-acid chain: NAC domain-containing protein 19 (317 aa).

An NAC domain is found at 14–162 (LPPGFRFYPT…DWVLCRIYKK (149 aa)).

In terms of assembly, dimer. Interacts with RHA2A, RHA2B or RHG1A, but not with RHA3A or RHA3B. Expressed in stems, flowers, cauline leaves and rosettes.

The protein localises to the nucleus. Its function is as follows. Transcription factors that bind specifically to the 5'-CATGTG-3' motif. The protein is NAC domain-containing protein 19 (NAC019) of Arabidopsis thaliana (Mouse-ear cress).